A 424-amino-acid chain; its full sequence is Probable threonylcarbamoyladenosine tRNA methylthiotransferase (424 aa).

The 112-residue stretch at 4–115 folds into the MTTase N-terminal domain; sequence IRVYIETFGC…APQAVRAASN (112 aa). 6 residues coordinate [4Fe-4S] cluster: C13, C48, C79, C150, C154, and C157. Positions 136–365 constitute a Radical SAM core domain; sequence RSNPLIHIIP…EELKMRITEE (230 aa). The TRAM domain occupies 368–424; the sequence is RRLVGSFQEILVVERGRKGGFIGRTGSYIPVVTETGEPGSFRRVRIRDATGTYLLAD.

Belongs to the methylthiotransferase family. CDKAL1 subfamily. The cofactor is [4Fe-4S] cluster.

The catalysed reaction is N(6)-L-threonylcarbamoyladenosine(37) in tRNA + (sulfur carrier)-SH + AH2 + 2 S-adenosyl-L-methionine = 2-methylsulfanyl-N(6)-L-threonylcarbamoyladenosine(37) in tRNA + (sulfur carrier)-H + 5'-deoxyadenosine + L-methionine + A + S-adenosyl-L-homocysteine + 2 H(+). Its function is as follows. Catalyzes the methylthiolation of N6-threonylcarbamoyladenosine (t(6)A), leading to the formation of 2-methylthio-N6-threonylcarbamoyladenosine (ms(2)t(6)A) at position 37 in tRNAs that read codons beginning with adenine. This chain is Probable threonylcarbamoyladenosine tRNA methylthiotransferase, found in Methanothermobacter thermautotrophicus (strain ATCC 29096 / DSM 1053 / JCM 10044 / NBRC 100330 / Delta H) (Methanobacterium thermoautotrophicum).